A 122-amino-acid polypeptide reads, in one-letter code: Protein FAM223A (122 aa).

The protein belongs to the FAM223 family.

The chain is Protein FAM223A (FAM223A) from Homo sapiens (Human).